A 547-amino-acid chain; its full sequence is CAP-Gly domain-containing linker protein 3 (547 aa).

The segment at 1–49 is disordered; the sequence is MTKTDPAPMAPPPRGEEEEEEEEDEPVPEAPSPTQERRQKPVVHPSAPA. The span at 16–27 shows a compositional bias: acidic residues; the sequence is EEEEEEEEDEPV. 3 ANK repeats span residues 117–155, 160–189, and 197–226; these read TDMTLLHYACKAGAHGVGDPAAAVRLSQQLLALGADVTL, TNMNALHYAAYFDVPDLVRVLLKGARPRVV, and NHGSALHIAASSLCLGAAKCLLEHGANPAL. Residues 314–356 enclose the CAP-Gly 1 domain; sequence GTTEFASGQWVGVELDEPEGKNDGSVGGVRYFICPPKQGLFAS. The disordered stretch occupies residues 365 to 413; it reads DAPPSSVTSTPRTPRMDFSRVTGKGRREHKGKKKTPSSPSLGSLQQRDR. The span at 367–377 shows a compositional bias: low complexity; it reads PPSSVTSTPRT. Threonine 374 bears the Phosphothreonine mark. The segment covering 387–399 has biased composition (basic residues); sequence GKGRREHKGKKKT. A compositionally biased stretch (polar residues) spans 400-409; sequence PSSPSLGSLQ. Serine 401 is subject to Phosphoserine. In terms of domain architecture, CAP-Gly 2 spans 436 to 478; sequence GKTDFAPGYWYGIELDQPTGKHDGSVFGVRYFTCPPRHGVFAP. Residues 488–547 are goLD; it reads STDSPGDSVGAKKVHQVTMTQPKRTFTTVRTPKDIASENSISRLLFCCWFPWMLRAEMQS. 2 S-palmitoyl cysteine lipidation sites follow: cysteine 534 and cysteine 535.

In terms of assembly, homodimer. Interacts with AKT1 and AKT2; when AKT1 and AKT2 are phosphorylated and activated, affinity is higher for AKT2. Interacts with ZDHHC13 (via ANK repeats). Interacts with ZDHHC17 (via ANK repeats). Post-translationally, palmitoylation by ZDHHC17 regulates association with the plasma membrane.

The protein resides in the cell membrane. It is found in the cytoplasm. Its subcellular location is the golgi apparatus. It localises to the golgi stack. Its function is as follows. Functions as a cytoplasmic linker protein. Involved in TGN-endosome dynamics. May modulate the cellular compartmentalization of AKT kinase family and promote its cell membrane localization, thereby playing a role in glucose transport in adipocytes. In Pongo abelii (Sumatran orangutan), this protein is CAP-Gly domain-containing linker protein 3 (CLIP3).